Reading from the N-terminus, the 454-residue chain is Growth/differentiation factor 9 (454 aa).

A signal peptide spans 1–24 (MARPNKFLLWFCCFAWLCFPISLG). The propeptide occupies 25-319 (SQASGGEAQI…GRSSHHRHRR (295 aa)). 5 N-linked (GlcNAc...) asparagine glycosylation sites follow: asparagine 106, asparagine 163, asparagine 236, asparagine 255, and asparagine 268. The disordered stretch occupies residues 303-330 (GEEAAEDGRSSHHRHRRGQETVSSELKK). A Phosphoserine; by CK modification is found at serine 325. Asparagine 338 is a glycosylation site (N-linked (GlcNAc...) asparagine). Cystine bridges form between cysteine 353-cysteine 419, cysteine 382-cysteine 451, and cysteine 386-cysteine 453.

This sequence belongs to the TGF-beta family. Homodimer or heterodimer (Potential). But, in contrast to other members of this family, cannot be disulfide-linked. Phosphorylated; phosphorylation is critical for GDF9 function. In vitro, can be phosphorylated by CK at Ser-325. In terms of tissue distribution, expressed in ovarian granulosa cells. Present in oocytes of primary follicles (at protein level).

Its subcellular location is the secreted. Its function is as follows. Required for ovarian folliculogenesis. Promotes primordial follicle development. Stimulates granulosa cell proliferation. Promotes cell transition from G0/G1 to S and G2/M phases, through an increase of CCND1 and CCNE1 expression, and RB1 phosphorylation. It regulates STAR expression and cAMP-dependent progesterone release in granulosa and thecal cells. Attenuates the suppressive effects of activin A on STAR expression and progesterone production by increasing the expression of inhibin B. It suppresses FST and FSTL3 production in granulosa-lutein cells. The sequence is that of Growth/differentiation factor 9 (GDF9) from Homo sapiens (Human).